We begin with the raw amino-acid sequence, 312 residues long: Aspartate carbamoyltransferase catalytic subunit (312 aa).

Residues R58 and T59 each coordinate carbamoyl phosphate. K86 lines the L-aspartate pocket. Positions 108, 136, and 139 each coordinate carbamoyl phosphate. Residues R169 and R223 each coordinate L-aspartate. Carbamoyl phosphate contacts are provided by G264 and P265.

This sequence belongs to the aspartate/ornithine carbamoyltransferase superfamily. ATCase family. Heterododecamer (2C3:3R2) of six catalytic PyrB chains organized as two trimers (C3), and six regulatory PyrI chains organized as three dimers (R2).

The enzyme catalyses carbamoyl phosphate + L-aspartate = N-carbamoyl-L-aspartate + phosphate + H(+). Its pathway is pyrimidine metabolism; UMP biosynthesis via de novo pathway; (S)-dihydroorotate from bicarbonate: step 2/3. In terms of biological role, catalyzes the condensation of carbamoyl phosphate and aspartate to form carbamoyl aspartate and inorganic phosphate, the committed step in the de novo pyrimidine nucleotide biosynthesis pathway. The chain is Aspartate carbamoyltransferase catalytic subunit from Desulfitobacterium hafniense (strain DSM 10664 / DCB-2).